The sequence spans 367 residues: Glycerol dehydrogenase (367 aa).

Positions 37, 94, 95, 116, and 119 each coordinate NAD(+). Residue Asp121 coordinates glycerol. Residues Ser125, Leu127, and Tyr131 each coordinate NAD(+). Positions 171, 254, and 271 each coordinate Zn(2+). His254 lines the glycerol pocket.

The protein belongs to the iron-containing alcohol dehydrogenase family. It depends on Zn(2+) as a cofactor.

It carries out the reaction glycerol + NAD(+) = dihydroxyacetone + NADH + H(+). The protein operates within polyol metabolism; glycerol fermentation; glycerone phosphate from glycerol (oxidative route): step 1/2. Functionally, catalyzes the NAD-dependent oxidation of glycerol to dihydroxyacetone (glycerone). Allows microorganisms to utilize glycerol as a source of carbon under anaerobic conditions. In Escherichia coli O6:H1 (strain CFT073 / ATCC 700928 / UPEC), this protein is Glycerol dehydrogenase (gldA).